The sequence spans 532 residues: MRPRSALRYSLLLLAFAASAAIQAQPKTLAVCTEAAPEGFDPARYTSGYTFDASAHPLYNALAAFAPGSATVIPALAESWDVSADGLVYTFRLRQGVKFHSTDYFKPSREFNADDVLFSFQRMLDPQHPAHDLSPSGYPYADAMQLRDIIERIEKIDEHQVRFVLKHPEAPFLADLAMPFGSILSAEYAGQLIARGKGDELNSKPIGTGPFVFTRYRKDAQVRYAANPDYWKGKPAIDHLVLAITLDPNVRVQRLRRNECQIALTPKPEDVAALRQDPQLTVLEEAAMITSHAAINTRHEPFDDPRVRRAIAMGFNKSSYLKIVFGDQARPAIGPYPPMLLGYDDSIRDWPYDPERAKALLKEAGVAPDTPLNLYISTGSGPGGNPARVAQLIQSDLAAIGIRVNIHQFEWGEMVKRTKAGEHDMMLYSWIGDNGDPDNFLTHNLGCASVESGENRARWCDKGFDEAIRKARMSNDESQRVALYKEAQRIFHEQMPWLPLAHPLMFDAQRKNVSGYRMSPMSARDFSRVKLD.

The first 24 residues, 1–24 (MRPRSALRYSLLLLAFAASAAIQA), serve as a signal peptide directing secretion.

This sequence belongs to the bacterial solute-binding protein 5 family. As to quaternary structure, the complex is composed of two ATP-binding proteins (DppD and DppF), two transmembrane proteins (DppB and DppC) and a solute-binding protein (DppA2). Five orthologous SBPs (DppA1-A5) are present in P.aeruginosa, which increases the substrate specificity of the DppBCDF transporter.

Its function is as follows. Part of the ABC transporter DppABCDF involved in the uptake of various di/tripeptides. Shows high flexibility on substrate recognition. Efficiently uses tripeptides. This Pseudomonas aeruginosa (strain UCBPP-PA14) protein is Di/tripeptide-binding protein 2.